Here is an 82-residue protein sequence, read N- to C-terminus: Small ribosomal subunit protein bS16 (82 aa).

Belongs to the bacterial ribosomal protein bS16 family.

In Erwinia tasmaniensis (strain DSM 17950 / CFBP 7177 / CIP 109463 / NCPPB 4357 / Et1/99), this protein is Small ribosomal subunit protein bS16.